A 365-amino-acid chain; its full sequence is UDP-N-acetylglucosamine--N-acetylmuramyl-(pentapeptide) pyrophosphoryl-undecaprenol N-acetylglucosamine transferase (365 aa).

UDP-N-acetyl-alpha-D-glucosamine-binding positions include 17–19, N129, R167, S194, I250, 269–274, and Q295; these read TGG and ALTVSE.

This sequence belongs to the glycosyltransferase 28 family. MurG subfamily.

The protein resides in the cell inner membrane. The enzyme catalyses di-trans,octa-cis-undecaprenyl diphospho-N-acetyl-alpha-D-muramoyl-L-alanyl-D-glutamyl-meso-2,6-diaminopimeloyl-D-alanyl-D-alanine + UDP-N-acetyl-alpha-D-glucosamine = di-trans,octa-cis-undecaprenyl diphospho-[N-acetyl-alpha-D-glucosaminyl-(1-&gt;4)]-N-acetyl-alpha-D-muramoyl-L-alanyl-D-glutamyl-meso-2,6-diaminopimeloyl-D-alanyl-D-alanine + UDP + H(+). The protein operates within cell wall biogenesis; peptidoglycan biosynthesis. Cell wall formation. Catalyzes the transfer of a GlcNAc subunit on undecaprenyl-pyrophosphoryl-MurNAc-pentapeptide (lipid intermediate I) to form undecaprenyl-pyrophosphoryl-MurNAc-(pentapeptide)GlcNAc (lipid intermediate II). The chain is UDP-N-acetylglucosamine--N-acetylmuramyl-(pentapeptide) pyrophosphoryl-undecaprenol N-acetylglucosamine transferase from Shewanella pealeana (strain ATCC 700345 / ANG-SQ1).